Reading from the N-terminus, the 427-residue chain is Lipophilic envelope-spanning tunnel protein A (427 aa).

Topologically, residues 1–75 (MALNTPQITP…LTRLAAMAFT (75 aa)) are cytoplasmic. The helical transmembrane segment at 76–96 (MLLLMPFAWGEPLLHIWLLGI) threads the bilayer. Over 97 to 120 (RIDANVMQGIWQMTKQGDAITGSM) the chain is Periplasmic. Residues 121–141 (VFFCVIGAPLILVTSIAYLWF) form a helical membrane-spanning segment. Over 142 to 269 (GNRLGMNLRP…RHSLQKCWAA (128 aa)) the chain is Cytoplasmic. A helical membrane pass occupies residues 270 to 290 (LLASIVLLLPANLLPISIIYL). Residues 291 to 310 (NGGRQEDTILSGIMSLASSN) are Periplasmic-facing. A helical transmembrane segment spans residues 311–331 (IAVAGIVFIASILVPFTKVIV). The Cytoplasmic segment spans residues 332–350 (MFTLLLSIHFKCQQGLRTR). A helical transmembrane segment spans residues 351–371 (ILLLRMVTWIGRWSMLDLFVI). Residues 372 to 382 (SLTMSLINRDQ) lie on the Periplasmic side of the membrane. Residues 383 to 403 (ILAFTMGPAAFYFGAAVILTI) traverse the membrane as a helical segment. At 404 to 427 (LAVEWLDSRLLWDAHESGNARFDD) the chain is on the cytoplasmic side.

This sequence belongs to the PqiA family. May interact with LetB in the inner membrane.

The protein localises to the cell inner membrane. Could be part, together with LetB, of a system that transports lipids between the inner membrane and the outer membrane. Contributes to membrane integrity. In Escherichia coli (strain K12), this protein is Lipophilic envelope-spanning tunnel protein A.